The primary structure comprises 1025 residues: Retinoblastoma-related protein (1025 aa).

Residues 1–20 (MEDHPPKPSIPTADASLSNH) are disordered. Residues 422 to 623 (TPVTTAMTTA…EKGSSMYNSL (202 aa)) are domain A. Residues 422–875 (TPVTTAMTTA…NEIFIPAVKP (454 aa)) form a pocket region. The tract at residues 624–744 (TVARPALSAE…PGAGGETCAE (121 aa)) is spacer. The domain B stretch occupies residues 745–875 (TAINVFFSKI…NEIFIPAVKP (131 aa)).

Belongs to the retinoblastoma protein (RB) family.

It is found in the nucleus. Its function is as follows. Regulator of biological processes that recruits a histone deacetylase to control gene transcription. May play a role in the entry into mitosis, negatively regulating the cell proliferation. Formation of stable complexes with geminiviridae replication-associated proteins may create a cellular environment which favors viral DNA replication. This Camellia sinensis (Tea plant) protein is Retinoblastoma-related protein (pRB).